We begin with the raw amino-acid sequence, 195 residues long: MKISHFFACLDRLRLIQRWSLMRNIEKENLAEHSLQVAFVAHALAVIKNKFYQGHLNPDRIAVMAMYHDTSEIFTGDLPTPIKYFNPKITQAYKEIENAAEAHLLALLPKELQADFAPYLDSTQFSAQEKHVVKQADLICAYVKAQFELENGNQEFKAAKARLETLMKTWHSDEMRYFIEVFIPSFGKPIDEITL.

Residues 18–19 (RW) and His33 contribute to the substrate site. The HD domain maps to 30-142 (LAEHSLQVAF…VKQADLICAY (113 aa)). Residues His33, His68, and Asp69 each coordinate a divalent metal cation. Substrate contacts are provided by residues Asp69, 77-80 (DLPT), and Asp137. Asp137 lines the a divalent metal cation pocket.

Belongs to the 5DNU family. Homodimer. A divalent metal cation is required as a cofactor.

The protein resides in the cytoplasm. The enzyme catalyses a 2'-deoxyribonucleoside 5'-phosphate + H2O = a 2'-deoxyribonucleoside + phosphate. Its function is as follows. Catalyzes the strictly specific dephosphorylation of 2'-deoxyribonucleoside 5'-monophosphates. In Pasteurella multocida (strain Pm70), this protein is 5'-deoxynucleotidase PM0747.